Reading from the N-terminus, the 89-residue chain is MANIKSQIKRNLTNEKRRLRNKAVKSELKTHVRRFRDAVDAGDVERAGETLRIASRKLDKAVSKGVIHANQAANKKSALARTHANLAAS.

Polar residues predominate over residues 1 to 11 (MANIKSQIKRN). The tract at residues 1–22 (MANIKSQIKRNLTNEKRRLRNK) is disordered.

Belongs to the bacterial ribosomal protein bS20 family.

Its function is as follows. Binds directly to 16S ribosomal RNA. The protein is Small ribosomal subunit protein bS20 of Frankia casuarinae (strain DSM 45818 / CECT 9043 / HFP020203 / CcI3).